Here is a 264-residue protein sequence, read N- to C-terminus: S-adenosylmethionine decarboxylase proenzyme (264 aa).

Serine 113 (schiff-base intermediate with substrate; via pyruvic acid) is an active-site residue. At serine 113 the chain carries Pyruvic acid (Ser); by autocatalysis. The Proton acceptor; for processing activity role is filled by histidine 118. Cysteine 141 (proton donor; for catalytic activity) is an active-site residue.

Belongs to the prokaryotic AdoMetDC family. Type 2 subfamily. In terms of assembly, heterooctamer of four alpha and four beta chains arranged as a tetramer of alpha/beta heterodimers. The cofactor is pyruvate. Post-translationally, is synthesized initially as an inactive proenzyme. Formation of the active enzyme involves a self-maturation process in which the active site pyruvoyl group is generated from an internal serine residue via an autocatalytic post-translational modification. Two non-identical subunits are generated from the proenzyme in this reaction, and the pyruvate is formed at the N-terminus of the alpha chain, which is derived from the carboxyl end of the proenzyme. The post-translation cleavage follows an unusual pathway, termed non-hydrolytic serinolysis, in which the side chain hydroxyl group of the serine supplies its oxygen atom to form the C-terminus of the beta chain, while the remainder of the serine residue undergoes an oxidative deamination to produce ammonia and the pyruvoyl group blocking the N-terminus of the alpha chain.

It catalyses the reaction S-adenosyl-L-methionine + H(+) = S-adenosyl 3-(methylsulfanyl)propylamine + CO2. It functions in the pathway amine and polyamine biosynthesis; S-adenosylmethioninamine biosynthesis; S-adenosylmethioninamine from S-adenosyl-L-methionine: step 1/1. In terms of biological role, catalyzes the decarboxylation of S-adenosylmethionine to S-adenosylmethioninamine (dcAdoMet), the propylamine donor required for the synthesis of the polyamines spermine and spermidine from the diamine putrescine. In Pseudomonas aeruginosa (strain ATCC 15692 / DSM 22644 / CIP 104116 / JCM 14847 / LMG 12228 / 1C / PRS 101 / PAO1), this protein is S-adenosylmethionine decarboxylase proenzyme.